Consider the following 438-residue polypeptide: Transcriptional enhancer factor TEF-3 (438 aa).

Residues 1-18 (MTSEWSSPASPEGSNDSG) show a composition bias toward polar residues. Disordered stretches follow at residues 1-36 (MTSEWSSPASPEGSNDSGGSEALDKPIDNDAEGVWS) and 195-217 (QPSLPLPGFDSPTGLPPSSSTPA). A DNA-binding region (TEA) is located at residues 28 to 104 (DNDAEGVWSP…QVLARRKARE (77 aa)). The span at 205-216 (SPTGLPPSSSTP) shows a compositional bias: low complexity.

Enriched in cardiac and skeletal muscle.

It localises to the nucleus. In terms of biological role, transcription factor which plays a key role in the Hippo signaling pathway, a pathway involved in organ size control and tumor suppression by restricting proliferation and promoting apoptosis. The core of this pathway is composed of a kinase cascade wherein MST1/MST2, in complex with its regulatory protein SAV1, phosphorylates and activates LATS1/2 in complex with its regulatory protein MOB1, which in turn phosphorylates and inactivates YAP1 oncoprotein and WWTR1/TAZ. Binds m-cat elements from muscle-specific promoters and differentially activate transcription. Functionally, isoform B has probably a transactivation capacity that is lacking in the other isoforms. Isoform D may be defective in DNA binding. This chain is Transcriptional enhancer factor TEF-3 (TEAD4), found in Gallus gallus (Chicken).